The primary structure comprises 349 residues: N-acetyl-gamma-glutamyl-phosphate reductase (349 aa).

Cys149 is an active-site residue.

It belongs to the NAGSA dehydrogenase family. Type 1 subfamily.

It is found in the cytoplasm. The catalysed reaction is N-acetyl-L-glutamate 5-semialdehyde + phosphate + NADP(+) = N-acetyl-L-glutamyl 5-phosphate + NADPH + H(+). Its pathway is amino-acid biosynthesis; L-arginine biosynthesis; N(2)-acetyl-L-ornithine from L-glutamate: step 3/4. Its function is as follows. Catalyzes the NADPH-dependent reduction of N-acetyl-5-glutamyl phosphate to yield N-acetyl-L-glutamate 5-semialdehyde. The protein is N-acetyl-gamma-glutamyl-phosphate reductase of Acinetobacter baylyi (strain ATCC 33305 / BD413 / ADP1).